Consider the following 434-residue polypeptide: Salicylate hydroxylase (434 aa).

9-38 serves as a coordination point for FAD; that stretch reads RIGIVGGGISGVALALELCRYSHIQVQLFE.

As to quaternary structure, monomer. FAD serves as cofactor.

The catalysed reaction is salicylate + NADH + O2 + 2 H(+) = catechol + CO2 + NAD(+) + H2O. It participates in aromatic compound metabolism; naphthalene degradation. This is Salicylate hydroxylase (nahG) from Pseudomonas putida (Arthrobacter siderocapsulatus).